A 2262-amino-acid polypeptide reads, in one-letter code: Klarsicht protein (2262 aa).

Disordered regions lie at residues 1–140 (MEMQ…VGND), 345–410 (QQQQ…GEGN), 442–475 (AANGLDDDEDEEEDTEDDSFGYEGEATEDDLNEV), 514–561 (QSQS…PDIG), 800–832 (ATSSVDGLQSTAVSSTTATGGPLPPSDDSDKEN), 859–898 (SNYDSSSACSSSNSNSNSNSNSNGRLTETSATSRVTQLQM), 1000–1031 (HLPPRSPAKSAKSTKSQASNATVSGSTLVSPV), 1115–1157 (PSCK…SEGF), 1246–1316 (SGLA…ELGG), and 1533–1670 (VRRK…QQSR). The interval 1-1774 (MEMQQENETG…KPTPELLDTE (1774 aa)) is required for apical microtubules localization. The Cytoplasmic portion of the chain corresponds to 1–2215 (MEMQQENETG…KRGWAWRIAR (2215 aa)). Positions 58–67 (KIEHTTKPLK) are enriched in basic and acidic residues. The span at 131–140 (NYGTNSVGND) shows a compositional bias: polar residues. Positions 345–402 (QQQQLSSQQPASLTSNCSSESTSESATKSSSLSSGFASDPVTTPIGTAAAAPPSSSTH) are enriched in low complexity. Residues 446–475 (LDDDEDEEEDTEDDSFGYEGEATEDDLNEV) show a composition bias toward acidic residues. Positions 514–525 (QSQSRSQQVPSQ) are enriched in low complexity. Positions 546 to 560 (EADEELEEEDEDPDI) are enriched in acidic residues. Composition is skewed to low complexity over residues 809-818 (STAVSSTTAT) and 859-881 (SNYDSSSACSSSNSNSNSNSNSN). Polar residues predominate over residues 882-894 (GRLTETSATSRVT). Over residues 1006–1018 (PAKSAKSTKSQAS) the composition is skewed to low complexity. The segment covering 1019 to 1028 (NATVSGSTLV) has biased composition (polar residues). A compositionally biased stretch (polar residues) spans 1246 to 1259 (SGLASHSISESALD). The segment covering 1267–1280 (PRAASSSGTGSNAA) has biased composition (low complexity). The segment covering 1288–1299 (SLRRRKARKKRI) has biased composition (basic residues). A compositionally biased stretch (low complexity) spans 1550 to 1559 (QSDQQQQQLQ). A compositionally biased stretch (polar residues) spans 1560–1583 (VTPSLSASATALMTTPKNQSTSHQ). Basic and acidic residues-rich tracts occupy residues 1586–1596 (HRAESVGRKLD) and 1610–1640 (RTSESDTSTRRRRTVTADERRRSSRNLEKCI). A coiled-coil region spans residues 1809-1842 (LTKQERRLQSALEEQEQQQESEQLKQQKLVEEEK). The tract at residues 2092–2205 (HQQKQQIQQN…GEGADPAQTS (114 aa)) is disordered. Residues 2093 to 2105 (QQKQQIQQNQTQQ) are compositionally biased toward low complexity. Residues 2130–2142 (RRGKGARKARQAK) are compositionally biased toward basic residues. In terms of domain architecture, KASH spans 2207–2262 (RGWAWRIARAAVPMQVALFTIFCAACLMQPNCCDNLNNLSMSFTPQLRYIRGPPPI). The helical; Anchor for type IV membrane protein transmembrane segment at 2216–2236 (AAVPMQVALFTIFCAACLMQP) threads the bilayer. Over 2237–2262 (NCCDNLNNLSMSFTPQLRYIRGPPPI) the chain is Perinuclear space.

This sequence belongs to the nesprin family. Core component of LINC complexes which are composed of inner nuclear membrane SUN domain-containing proteins coupled to outer nuclear membrane KASH domain-containing nesprins. Interacts with kud. Interacts with Msp300; this interaction allows the anchoring of Msp300 nuclear ring structure to the nuclear envelope. In terms of tissue distribution, expressed ubiquitously in the eye disk, but at much higher levels posterior to the morphogenetic furrow. Expressed in R-cells and also in non-neural cone cells.

It is found in the cytoplasm. Its subcellular location is the cytoskeleton. It localises to the microtubule organizing center. The protein resides in the perinuclear region. The protein localises to the nucleus membrane. It is found in the nucleus envelope. In terms of biological role, component of the LINC (LInker of Nucleoskeleton and Cytoskeleton) complex involved in the connection between the nuclear lamina and the cytoskeleton. Plays a role in the nuclear positioning and links the nucleus to the microtubule organizing center (MTOC). Collaborates with Klar to promote even spacing of the myonuclei at the periphery of striated muscle fibers by mediating a tight association between a nuclear ring structure of Msp300 and the plus ends of a unique astral microtubule (MT) network. The protein is Klarsicht protein of Drosophila melanogaster (Fruit fly).